Consider the following 219-residue polypeptide: GTP-binding nuclear protein GSP1/CNR1 (219 aa).

Ser-2 bears the N-acetylserine mark. Ser-2 is modified (phosphoserine). In terms of domain architecture, Small GTPase Ran-type spans 9 to 173 (EVPTFKLVLV…LWLARKLAGN (165 aa)). 20–27 (DGGTGKTT) lines the GTP pocket. The segment at 39–47 (KKYIATIGV) is switch-I. Residues Gly-70, 124 to 127 (NKVD), and 152 to 154 (SAK) each bind GTP. Residues 70 to 86 (GQEKFGGLRDGYYINAQ) are switch-II.

This sequence belongs to the small GTPase superfamily. Ran family. In terms of assembly, found in a nuclear export complex with RanGTP, exportin and pre-miRNA. Forms a complex with YRB1. Interacts with BUD5, CEX1, RRP12, SRM1, and DIS3/RRP44.

The protein resides in the nucleus. Functionally, GTP-binding protein involved in nucleocytoplasmic transport. Required for the import of protein into the nucleus and also for RNA export. Essential for cell viability. By analogy with Ras, Ran may be activated when GTP is exchanged for bound GDP by RCC1 and inactivated when GTP is hydrolyzed by Ran upon activation by RanGAP1. In Saccharomyces cerevisiae (strain ATCC 204508 / S288c) (Baker's yeast), this protein is GTP-binding nuclear protein GSP1/CNR1 (GSP1).